The primary structure comprises 297 residues: Calponin-1 (297 aa).

The Calponin-homology (CH) domain maps to 28–131 (HQREQELREW…STLLALASMA (104 aa)). Serine 48 is modified (phosphoserine). 3 Calponin-like repeats span residues 164–189 (IGLQMGTNKFASQQGMTAYGTRRHLY), 204–229 (ISLQMGTNKGASQAGMTAPGTKRQIF), and 243–268 (VSLQMGSNKGASQRGMTVYGLPRQVY). Threonine 170 is subject to Phosphothreonine; by ROCK2. Position 175 is a phosphoserine; by ROCK2 (serine 175). A phosphothreonine; by ROCK2 mark is found at threonine 180 and threonine 184. Threonine 259 is subject to Phosphothreonine; by ROCK2.

The protein belongs to the calponin family. In terms of assembly, part of cGMP kinase signaling complex at least composed of ACTA2/alpha-actin, CNN1/calponin H1, PLN/phospholamban, PRKG1 and ITPR1. As to expression, smooth muscle, and tissues containing significant amounts of smooth muscle.

Its function is as follows. Thin filament-associated protein that is implicated in the regulation and modulation of smooth muscle contraction. It is capable of binding to actin, calmodulin and tropomyosin. The interaction of calponin with actin inhibits the actomyosin Mg-ATPase activity. The chain is Calponin-1 (Cnn1) from Rattus norvegicus (Rat).